A 396-amino-acid chain; its full sequence is Ribosomal RNA large subunit methyltransferase I (396 aa).

The region spanning 2-81 (SVRLVLAKGR…ESIDIAFFSR (80 aa)) is the PUA domain.

This sequence belongs to the methyltransferase superfamily. RlmI family.

It localises to the cytoplasm. It catalyses the reaction cytidine(1962) in 23S rRNA + S-adenosyl-L-methionine = 5-methylcytidine(1962) in 23S rRNA + S-adenosyl-L-homocysteine + H(+). In terms of biological role, specifically methylates the cytosine at position 1962 (m5C1962) of 23S rRNA. The polypeptide is Ribosomal RNA large subunit methyltransferase I (Shigella boydii serotype 18 (strain CDC 3083-94 / BS512)).